A 191-amino-acid polypeptide reads, in one-letter code: Thymidine kinase (191 aa).

ATP contacts are provided by residues Gly15 to Thr22 and Asp88 to Gln91. Glu89 serves as the catalytic Proton acceptor. Residues Cys145, Cys148, Cys183, and Cys186 each contribute to the Zn(2+) site.

Belongs to the thymidine kinase family. As to quaternary structure, homotetramer.

It is found in the cytoplasm. It catalyses the reaction thymidine + ATP = dTMP + ADP + H(+). In Clostridium botulinum (strain Kyoto / Type A2), this protein is Thymidine kinase.